The sequence spans 172 residues: Translation initiation factor IF-3 (172 aa).

It belongs to the IF-3 family. In terms of assembly, monomer.

It is found in the cytoplasm. IF-3 binds to the 30S ribosomal subunit and shifts the equilibrium between 70S ribosomes and their 50S and 30S subunits in favor of the free subunits, thus enhancing the availability of 30S subunits on which protein synthesis initiation begins. The chain is Translation initiation factor IF-3 from Lactobacillus johnsonii (strain CNCM I-12250 / La1 / NCC 533).